Here is a 44-residue protein sequence, read N- to C-terminus: Photosystem I reaction center subunit IX (44 aa).

A helical transmembrane segment spans residues 7–27 (YLSTVPVLTTLWFGSLAGLLI).

Belongs to the PsaJ family.

Its subcellular location is the plastid. It localises to the chloroplast thylakoid membrane. May help in the organization of the PsaE and PsaF subunits. This is Photosystem I reaction center subunit IX from Dioscorea elephantipes (Elephant's foot yam).